Here is a 238-residue protein sequence, read N- to C-terminus: Ribitol-5-phosphate cytidylyltransferase 2 (238 aa).

CTP is bound by residues 7-10 and 81-87; these read LAGG and GTDRNET.

It belongs to the IspD/TarI cytidylyltransferase family. TarI subfamily.

It catalyses the reaction D-ribitol 5-phosphate + CTP + H(+) = CDP-L-ribitol + diphosphate. Its pathway is cell wall biogenesis; poly(ribitol phosphate) teichoic acid biosynthesis. Functionally, catalyzes the transfer of the cytidylyl group of CTP to D-ribitol 5-phosphate. The protein is Ribitol-5-phosphate cytidylyltransferase 2 of Staphylococcus aureus (strain MSSA476).